We begin with the raw amino-acid sequence, 157 residues long: uncharacterized protein (157 aa).

Residues 9–154 enclose the N-acetyltransferase domain; it reads LLINYKTLDE…ETNLNAVTNE (146 aa).

This is an uncharacterized protein from Bacillus cereus (strain G9842).